We begin with the raw amino-acid sequence, 408 residues long: Retron Ec48 reverse transcriptase (408 aa).

One can recognise a Reverse transcriptase domain in the interval 43 to 269; sequence EELKAIAELP…EPIKVHGLRV (227 aa). 3 residues coordinate Mg(2+): aspartate 137, aspartate 216, and aspartate 217.

The protein belongs to the bacterial reverse transcriptase family.

It catalyses the reaction DNA(n) + a 2'-deoxyribonucleoside 5'-triphosphate = DNA(n+1) + diphosphate. Functionally, reverse transcriptase (RT) component of antiviral defense system retron Ec48, composed of a non-coding RNA (ncRNA), this reverse transcriptase (RT) and the following membrane protein. Expression of this retron confers protection against bacteriophages lambda, T2, T4, T5 and T7. At multiplicity of infection (MOI) of 0.02 cultures grow normally when infected with lambda without collapsing, at MOI 2 cultures enter growth stasis. At MOI 3 cell membranes are permeabilized within 15 minutes of infection but do not lyse, suggesting the phage are not able to finish a replication cycle. Antiviral defense is suppressed by mutations that knockout the lambda gam expression or phage T7 gp5.9 expression; both viral genes inhibit host RecBCD. The Ec48 retron may sense the integrity of the RecBCD enzyme; when RecBCD is perturbed by viral proteins the Ec48 effector (the membrane protein) is activated, leading to abortive infection and bacterial growth arrest. Responsible for synthesis of msDNA-Ec48 (a branched molecule with RNA linked by a 2',5'-phosphodiester bond to ssDNA). The retron transcript serves as primer (from a conserved internal G residue) and template for the reaction, and codes for the RT. This Escherichia coli protein is Retron Ec48 reverse transcriptase.